The primary structure comprises 463 residues: Matrix remodeling-associated protein 8 (463 aa).

An N-terminal signal peptide occupies residues Met-1–Ala-19. Residues Val-20 to Gln-362 lie on the Extracellular side of the membrane. 2 consecutive Ig-like V-type domains span residues Pro-29 to Thr-173 and Pro-176 to Thr-308. Disulfide bonds link Cys-54–Cys-153 and Cys-202–Cys-288. A glycan (N-linked (GlcNAc...) asparagine) is linked at Asn-135. A Phosphoserine modification is found at Ser-244. The short motif at Arg-268–Asp-270 is the RGD element. The tract at residues Glu-309 to Leu-341 is disordered. A compositionally biased stretch (low complexity) spans Ser-321–Gly-335. Residue Asn-324 is glycosylated (N-linked (GlcNAc...) asparagine). The helical transmembrane segment at Leu-363 to Ala-383 threads the bilayer. Residues Thr-384–Lys-463 lie on the Cytoplasmic side of the membrane.

In terms of assembly, homodimer in cis. Does not appear to form trans-homodimers. Interacts with ITGB3; the interaction inhibits ITGAV:ITGB3 heterodimer formation.

The protein resides in the cell membrane. It is found in the cell junction. Its subcellular location is the tight junction. The protein localises to the cytoplasm. It localises to the cell projection. The protein resides in the cilium membrane. It is found in the nucleus. Transmembrane protein which can modulate activity of various signaling pathways, probably via binding to integrin ITGAV:ITGB3. Mediates heterophilic cell-cell interactions in vitro. Inhibits osteoclastogenesis downstream of TNFSF11/RANKL and CSF1, where it may function by attenuating signaling via integrin ITGB3 and MAP kinase p38. Plays a role in cartilage formation where it promotes proliferation and maturation of growth plate chondrocytes. Stimulates formation of primary cilia in chondrocytes. Enhances expression of genes involved in the hedgehog signaling pathway in chondrocytes, including the hedgehog signaling molecule IHH; may also promote signaling via the PTHLH/PTHrP pathway. Plays a role in angiogenesis where it suppresses migration of endothelial cells and also promotes their apoptosis. Inhibits VEGF-induced activation of AKT and p38 MAP kinase in endothelial cells. Also inhibits VTN (vitronectin)-mediated integrin ITGAV:ITGB3 signaling and activation of PTK2/FAK. May play a role in the maturation and maintenance of the blood-brain barrier. The chain is Matrix remodeling-associated protein 8 (MXRA8) from Bos taurus (Bovine).